The chain runs to 328 residues: CMP-N-acetylneuraminate-beta-galactosamide-alpha-2,3-sialyltransferase 4 (328 aa).

The Cytoplasmic segment spans residues 1 to 7 (MCPAGWK). A helical; Signal-anchor for type II membrane protein transmembrane segment spans residues 8–25 (LLAMLALVLVVMVWYSIS). Residues 26 to 328 (REDSFYFPIP…MGAVKNLTSF (303 aa)) lie on the Lumenal side of the membrane. N56, N126, N305, and N324 each carry an N-linked (GlcNAc...) asparagine glycan. A disulfide bridge connects residues C115 and C268.

It belongs to the glycosyltransferase 29 family. In terms of processing, the soluble form derives from the membrane form by proteolytic processing.

Its subcellular location is the golgi apparatus. The protein resides in the golgi stack membrane. It localises to the secreted. The enzyme catalyses a beta-D-galactosyl-(1-&gt;3)-N-acetyl-beta-D-galactosaminyl derivative + CMP-N-acetyl-beta-neuraminate = an N-acetyl-alpha-neuraminyl-(2-&gt;3)-beta-D-galactosyl-(1-&gt;3)-N-acetyl-beta-D-galactosaminyl derivative + CMP + H(+). It catalyses the reaction a beta-D-galactosyl-(1-&gt;3)-N-acetyl-alpha-D-galactosaminyl derivative + CMP-N-acetyl-beta-neuraminate = an N-acetyl-alpha-neuraminyl-(2-&gt;3)-beta-D-galactosyl-(1-&gt;3)-N-acetyl-alpha-D-galactosaminyl derivative + CMP + H(+). It carries out the reaction a beta-D-galactosyl-(1-&gt;4)-N-acetyl-beta-D-glucosaminyl derivative + CMP-N-acetyl-beta-neuraminate = an N-acetyl-alpha-neuraminyl-(2-&gt;3)-beta-D-galactosyl-(1-&gt;4)-N-acetyl-beta-D-glucosaminyl derivative + CMP + H(+). The catalysed reaction is a ganglioside GM1 (d18:1(4E)) + CMP-N-acetyl-beta-neuraminate = a ganglioside GD1a (d18:1(4E)) + CMP + H(+). The enzyme catalyses a ganglioside GA1 (d18:1(4E)) + CMP-N-acetyl-beta-neuraminate = a ganglioside GM1b (d18:1(4E)) + CMP + H(+). It catalyses the reaction a ganglioside GT1c (d18:1(4E)) + CMP-N-acetyl-beta-neuraminate = a ganglioside GQ1c (d18:1(4E)) + CMP + H(+). It carries out the reaction a neolactoside nLc4Cer + CMP-N-acetyl-beta-neuraminate = a neolactoside IV(3)-alpha-NeuAc-nLc4Cer + CMP + H(+). The catalysed reaction is a neolactoside nLc4Cer(d18:1(4E)) + CMP-N-acetyl-beta-neuraminate = a neolactoside IV(3)-alpha-NeuAc-nLc4Cer(d18:1(4E)) + CMP + H(+). It functions in the pathway protein modification; protein glycosylation. Its pathway is glycolipid biosynthesis. Its function is as follows. A beta-galactoside alpha2-3 sialyltransferase involved in terminal sialylation of glycoproteins and glycolipids. Catalyzes the transfer of sialic acid (N-acetyl-neuraminic acid; Neu5Ac) from the nucleotide sugar donor CMP-Neu5Ac onto acceptor Galbeta-(1-&gt;3)-GalNAc- and Galbeta-(1-&gt;4)-GlcNAc-terminated glycoconjugates through an alpha2-3 linkage. Plays a major role in hemostasis. Responsible for sialylation of plasma VWF/von Willebrand factor, preventing its recognition by asialoglycoprotein receptors (ASGPR) and subsequent clearance. Regulates ASGPR-mediated clearance of platelets. Participates in the biosynthesis of the sialyl Lewis X epitopes, both on O- and N-glycans, which are recognized by SELE/E-selectin, SELP/P-selectin and SELL/L-selectin. Essential for selectin-mediated rolling and adhesion of leukocytes during extravasation. Contributes to adhesion and transendothelial migration of neutrophils likely through terminal sialylation of CXCR2. In glycosphingolipid biosynthesis, sialylates GM1 and GA1 gangliosides to form GD1a and GM1b, respectively. Metabolizes brain c-series ganglioside GT1c forming GQ1c. Synthesizes ganglioside LM1 (IV3Neu5Ac-nLc4Cer), a major structural component of peripheral nerve myelin. This chain is CMP-N-acetylneuraminate-beta-galactosamide-alpha-2,3-sialyltransferase 4 (ST3GAL4), found in Pan troglodytes (Chimpanzee).